A 199-amino-acid chain; its full sequence is Elongation factor Ts (199 aa).

The involved in Mg(2+) ion dislocation from EF-Tu stretch occupies residues threonine 82–valine 85.

The protein belongs to the EF-Ts family.

It localises to the cytoplasm. Functionally, associates with the EF-Tu.GDP complex and induces the exchange of GDP to GTP. It remains bound to the aminoacyl-tRNA.EF-Tu.GTP complex up to the GTP hydrolysis stage on the ribosome. The sequence is that of Elongation factor Ts from Leptospira interrogans serogroup Icterohaemorrhagiae serovar Lai (strain 56601).